The chain runs to 363 residues: Chorismate synthase (363 aa).

The NADP(+) site is built by Arg-48 and Arg-54. Residues 125 to 127 (RSS), 237 to 238 (NA), Gly-277, 292 to 296 (KPTSS), and Arg-318 each bind FMN.

Belongs to the chorismate synthase family. As to quaternary structure, homotetramer. Requires FMNH2 as cofactor.

It catalyses the reaction 5-O-(1-carboxyvinyl)-3-phosphoshikimate = chorismate + phosphate. It functions in the pathway metabolic intermediate biosynthesis; chorismate biosynthesis; chorismate from D-erythrose 4-phosphate and phosphoenolpyruvate: step 7/7. In terms of biological role, catalyzes the anti-1,4-elimination of the C-3 phosphate and the C-6 proR hydrogen from 5-enolpyruvylshikimate-3-phosphate (EPSP) to yield chorismate, which is the branch point compound that serves as the starting substrate for the three terminal pathways of aromatic amino acid biosynthesis. This reaction introduces a second double bond into the aromatic ring system. This chain is Chorismate synthase, found in Pseudomonas putida (strain W619).